Reading from the N-terminus, the 292-residue chain is Sulfofructosephosphate aldolase (292 aa).

Lys193 acts as the Schiff-base intermediate with substrate in catalysis.

It belongs to the aldolase LacD family. As to quaternary structure, homotetramer.

It catalyses the reaction 6-deoxy-6-sulfo-D-fructose 1-phosphate = (2S)-3-sulfolactaldehyde + dihydroxyacetone phosphate. In terms of biological role, cleaves 6-deoxy-6-sulfo-D-fructose 1-phosphate (SFP) to form dihydroxyacetone phosphate (DHAP) and 3-sulfolactaldehyde (SLA). The chain is Sulfofructosephosphate aldolase (yihT) from Escherichia coli O157:H7.